A 106-amino-acid polypeptide reads, in one-letter code: uncharacterized protein (106 aa).

Over residues 24-35 (ANSISSTSFYHK) the composition is skewed to polar residues. Disordered stretches follow at residues 24 to 49 (ANSISSTSFYHKSSNNNSHANASCEE) and 65 to 87 (LTAESSNHHSLSASNQPASSSDE). Low complexity-rich tracts occupy residues 36-46 (SSNNNSHANAS) and 74-85 (SLSASNQPASSS).

This is an uncharacterized protein from Arabidopsis thaliana (Mouse-ear cress).